Consider the following 116-residue polypeptide: UPF0102 protein LBJ_1427 (116 aa).

Belongs to the UPF0102 family.

This chain is UPF0102 protein LBJ_1427, found in Leptospira borgpetersenii serovar Hardjo-bovis (strain JB197).